Here is a 1214-residue protein sequence, read N- to C-terminus: Ubiquitin carboxyl-terminal hydrolase 36 (1214 aa).

The interval 124–169 (AVGSNGHDNNTVNGGTVNGNRKQTVDSGQSNQNSSANPNELPKPKR) is disordered. Positions 132–143 (NNTVNGGTVNGN) are enriched in low complexity. Over residues 144–161 (RKQTVDSGQSNQNSSANP) the composition is skewed to polar residues. The USP domain occupies 192 to 502 (AGMLNVGNTC…NAYIMFYELD (311 aa)). Cys201 functions as the Nucleophile in the catalytic mechanism. The active-site Proton acceptor is the His461. Residues 509-523 (SSTINNNSSSSSNNS) are compositionally biased toward low complexity. The segment at 509-532 (SSTINNNSSSSSNNSVAPKLNGLR) is disordered. A phosphoserine mark is found at Ser553 and Ser555. Disordered stretches follow at residues 631–819 (GEAA…KQKT), 836–964 (HRIA…ASKS), 977–1001 (QKLLNGSAKSAATTRPGNGYQSESV), 1048–1161 (HGDT…PNFQ), and 1176–1214 (KFQQQRALQRHLAAGGGFTRRQQQSTGQQQQQQQQQQQS). Residues 633–651 (AAPNANTNANANKSSCNNN) show a composition bias toward low complexity. A compositionally biased stretch (acidic residues) spans 666 to 685 (SDEDEDEDDSDDDDDDDDDD). Thr717 carries the post-translational modification Phosphothreonine. Phosphoserine is present on residues Ser727 and Ser729. Composition is skewed to low complexity over residues 735 to 751 (QQQQQQQQQLLQTPQQL) and 785 to 816 (KTNGSVSNTSNSSHSKAKSASNASSANVNSSK). The span at 856-868 (EQVQTEQGTKKLN) shows a compositional bias: polar residues. A compositionally biased stretch (low complexity) spans 869 to 878 (SASSASASKS). Ser891 is modified (phosphoserine). At Thr894 the chain carries Phosphothreonine. The residue at position 897 (Ser897) is a Phosphoserine. The span at 915 to 942 (DDDDEEDEEEDDVEADADQEDDDDEVVV) shows a compositional bias: acidic residues. Thr951 is modified (phosphothreonine). Positions 983-1001 (SAKSAATTRPGNGYQSESV) are enriched in polar residues. The segment covering 1058–1076 (NSSSNNSSNINSNSNSNSN) has biased composition (low complexity). The span at 1089–1098 (EAREQRKRDA) shows a compositional bias: basic and acidic residues. Composition is skewed to low complexity over residues 1178-1188 (QQQRALQRHLA) and 1197-1214 (QQQSTGQQQQQQQQQQQS).

Belongs to the peptidase C19 family. Interacts with atms/PAF1, but not with CycT.

The protein resides in the nucleus. It localises to the nucleolus. The catalysed reaction is Thiol-dependent hydrolysis of ester, thioester, amide, peptide and isopeptide bonds formed by the C-terminal Gly of ubiquitin (a 76-residue protein attached to proteins as an intracellular targeting signal).. Functionally, required for maintaining multiple types of adult stem cells, including male and female germline, epithelial follicle cell and intestinal stem cells. May function as a transcriptional repressor by continually deubiquiting histone H2B at the promoters of genes critical for cellular differentiation, thereby preventing histone H3 'Lys-4' trimethylation (H3K4). Controls selective autophagy activation by ubiquitinated proteins. This chain is Ubiquitin carboxyl-terminal hydrolase 36 (Usp36), found in Drosophila virilis (Fruit fly).